A 301-amino-acid chain; its full sequence is 4-hydroxy-tetrahydrodipicolinate synthase (301 aa).

Threonine 46 is a pyruvate binding site. The Proton donor/acceptor role is filled by tyrosine 134. Lysine 162 functions as the Schiff-base intermediate with substrate in the catalytic mechanism. Position 203 (isoleucine 203) interacts with pyruvate.

This sequence belongs to the DapA family. Homotetramer; dimer of dimers.

The protein resides in the cytoplasm. The catalysed reaction is L-aspartate 4-semialdehyde + pyruvate = (2S,4S)-4-hydroxy-2,3,4,5-tetrahydrodipicolinate + H2O + H(+). The protein operates within amino-acid biosynthesis; L-lysine biosynthesis via DAP pathway; (S)-tetrahydrodipicolinate from L-aspartate: step 3/4. Catalyzes the condensation of (S)-aspartate-beta-semialdehyde [(S)-ASA] and pyruvate to 4-hydroxy-tetrahydrodipicolinate (HTPA). This chain is 4-hydroxy-tetrahydrodipicolinate synthase, found in Anaplasma marginale (strain Florida).